Reading from the N-terminus, the 200-residue chain is Pyrrolidone-carboxylate peptidase (200 aa).

Catalysis depends on residues glutamate 78, cysteine 141, and histidine 165.

Belongs to the peptidase C15 family. As to quaternary structure, homotetramer.

The protein resides in the cytoplasm. The catalysed reaction is Release of an N-terminal pyroglutamyl group from a polypeptide, the second amino acid generally not being Pro.. Removes 5-oxoproline from various penultimate amino acid residues except L-proline. The protein is Pyrrolidone-carboxylate peptidase of Lactobacillus helveticus (strain DPC 4571).